A 482-amino-acid polypeptide reads, in one-letter code: Vanillin dehydrogenase (482 aa).

G228–G233 provides a ligand contact to NAD(+). Active-site residues include E250 and C284.

Belongs to the aldehyde dehydrogenase family.

The catalysed reaction is vanillin + NAD(+) + H2O = vanillate + NADH + 2 H(+). Its function is as follows. Catalyzes the NAD-dependent oxidation of vanillin to vanillic acid. In Pseudomonas fluorescens, this protein is Vanillin dehydrogenase (vdh).